A 494-amino-acid chain; its full sequence is Probable malate:quinone oxidoreductase 3 (494 aa).

This sequence belongs to the MQO family. Requires FAD as cofactor.

It carries out the reaction (S)-malate + a quinone = a quinol + oxaloacetate. It participates in carbohydrate metabolism; tricarboxylic acid cycle; oxaloacetate from (S)-malate (quinone route): step 1/1. The sequence is that of Probable malate:quinone oxidoreductase 3 from Staphylococcus epidermidis (strain ATCC 35984 / DSM 28319 / BCRC 17069 / CCUG 31568 / BM 3577 / RP62A).